Consider the following 320-residue polypeptide: Cytochrome f (320 aa).

A signal peptide spans 1–35 (MEKRNTYDWVTRWVIASFSILTISYMITWTSISNA). The heme site is built by Y36, C56, C59, and H60. Residues 286–306 (IQGLLVFLASVVLAQIFLVLK) traverse the membrane as a helical segment.

Belongs to the cytochrome f family. In terms of assembly, the 4 large subunits of the cytochrome b6-f complex are cytochrome b6, subunit IV (17 kDa polypeptide, petD), cytochrome f and the Rieske protein, while the 4 small subunits are PetG, PetL, PetM and PetN. The complex functions as a dimer. It depends on heme as a cofactor.

It is found in the plastid. The protein resides in the chloroplast thylakoid membrane. In terms of biological role, component of the cytochrome b6-f complex, which mediates electron transfer between photosystem II (PSII) and photosystem I (PSI), cyclic electron flow around PSI, and state transitions. This chain is Cytochrome f, found in Welwitschia mirabilis (Tree tumbo).